Here is a 486-residue protein sequence, read N- to C-terminus: Arginine/agmatine antiporter (486 aa).

12 consecutive transmembrane segments (helical) span residues Leu12–Ser32, Ala41–Ala61, Gly85–Gly105, Asn129–Leu149, Ile160–Ala180, Ser211–Ala231, Ala242–Phe262, Val296–Ile316, Leu341–Thr361, Met367–Phe387, Leu418–Leu438, and Glu461–Thr481.

This sequence belongs to the amino acid-polyamine-organocation (APC) superfamily. Basic amino acid/polyamine antiporter (APA) (TC 2.A.3.2) family.

It is found in the cell inner membrane. In terms of biological role, catalyzes the exchange of L-arginine for agmatine. The arginine uptake by the bacterium in the macrophage may be a virulence factor against the host innate immune response. The polypeptide is Arginine/agmatine antiporter (aaxC) (Chlamydia caviae (strain ATCC VR-813 / DSM 19441 / 03DC25 / GPIC) (Chlamydophila caviae)).